The chain runs to 221 residues: Immediate early response gene 2 protein (221 aa).

Position 1 is an N-acetylmethionine (Met-1). The interval 105-155 (ETPALCDPPPARVSRKRRSSSDLSDGSDAGLVPSKKARLEEVEGEATSEVP) is disordered. Residues 125 to 136 (SDLSDGSDAGLV) show a composition bias toward low complexity.

The protein belongs to the IER family.

The protein localises to the cytoplasm. It localises to the nucleus. Functionally, DNA-binding protein that seems to act as a transcription factor. Involved in the regulation of neuronal differentiation, acts upon JNK-signaling pathway activation and plays a role in neurite outgrowth in hippocampal cells. May mediate with FIBP FGF-signaling in the establishment of laterality in the embryo. Promotes cell motility, seems to stimulate tumor metastasis. This is Immediate early response gene 2 protein (Ier2) from Mus musculus (Mouse).